Reading from the N-terminus, the 257-residue chain is Flagellar brake protein YcgR 2 (257 aa).

One can recognise a PilZ domain in the interval 131–244 (QRREFFRVQT…AERTLQRVVT (114 aa)).

The protein belongs to the YcgR family. In terms of assembly, monomer. Interacts with the flagellar basal bodies.

It is found in the bacterial flagellum basal body. Functionally, acts as a flagellar brake, regulating swimming and swarming in a bis-(3'-5') cyclic diguanylic acid (c-di-GMP)-dependent manner. Binds 1 c-di-GMP dimer per subunit. Increasing levels of c-di-GMP lead to decreased motility. This Paraburkholderia phytofirmans (strain DSM 17436 / LMG 22146 / PsJN) (Burkholderia phytofirmans) protein is Flagellar brake protein YcgR 2.